The following is a 1606-amino-acid chain: Fatty acid synthase apf5 (1606 aa).

The region spanning 142-218 (VPVSAILISL…ETLSTSHDGQ (77 aa)) is the Carrier domain. Serine 177 is modified (O-(pantetheine 4'-phosphoryl)serine). Positions 996–1539 (KESLIEVALQ…QKGGQALLVH (544 aa)) constitute a Ketosynthase family 3 (KS3) domain. Residues cysteine 1182, histidine 1424, and histidine 1465 each act as for beta-ketoacyl synthase activity in the active site.

Belongs to the thiolase-like superfamily. Fungal fatty acid synthetase subunit alpha family.

It carries out the reaction a fatty acyl-[ACP] + malonyl-[ACP] + H(+) = a 3-oxoacyl-[ACP] + holo-[ACP] + CO2. It functions in the pathway secondary metabolite biosynthesis. Its function is as follows. Fatty acid synthase; part of the gene cluster that mediates the biosynthesis of the cyclic tetrapeptide apicidin F (APF). The non-ribosomal peptide synthetase apf1 incorporates four different amino acids to produce apicidin F: L-phenylalanine, D-pipecolic acid (D-pip), N-methoxy-L-tryptophan and L-2-aminooctanedioic acid. L-Phenylalanine is the only proteinogenic amino acid directly used by apf1. The 3 other apf1 substrates are non-proteinogenic and have to be modified by other enzymes of the cluster. Lysine is converted to delta-1-pyrroline-5-carboxylate (P5C) which is reduced to L-pipecolic acid (L-pip) by apf3. L-pip is epimerized to D-pip, probably by apf1 activity, prior to incorporation. L-Tryptophan is N-oxidyzed by one of the cytochrome P450 monooxygenases (apf7 or apf8), and further methylated at the hydroxy group by the O-methyltransferase apf6 to yield N-methoxy-L-tryptophan. The synthesis of the fourth apf1 substrate is more complex. The fatty acid synthase apf5 is involved in the synthesis of the octanoic acid backbone of L-2-aminooctanedioic acid by fixing one acetyl-CoA unit and three malonyl-CoA units. Then one of the cytochrome P450 monooxygenases (apf7 or apf8) may oxidize this backbone to 2-oxooctanoic acid. The aminotransferase apf4 is predicted to catalyze the exchange of the keto group with an amino group. The next step would be the oxidation of 2-aminooctanoic acid by one of the cytochrome P450 monooxygenases (apf7 or apf8). The last step is the oxidation of 2-amino-8-hydroxyoctanoic acid to 2-aminooctanedioic acid is catalyzed by the FAD-dependent monooxygenase apf9. The protein is Fatty acid synthase apf5 of Gibberella fujikuroi (strain CBS 195.34 / IMI 58289 / NRRL A-6831) (Bakanae and foot rot disease fungus).